Reading from the N-terminus, the 338-residue chain is MTRISLTRYLVEEQRKHNTIQPELRLLIEVVARACKAISNAVSKGALAGVLGSAGTGNVQGETQQKLDVIANEVLLDANEWGGHLAAMASEEMESFYEIPNRYPKGEYLLMFDPLDGSSNIDVNVSIGTIFSVLHMPKPGQTVTEADFLQPGTHQVAAGYAVYGPQTTLVLTVGNGVHMFTLDREAGSFVLTQSNVTIPEDTKEFAINMSNMRHWAPPVRKYIDECLAGDEGPRGKNFNMRWVASMVADVHRILTRGGIFMYPWDKREPEKPGKLRLMYEANPMAMLVEQAGGAATNGEQRILDVQPEKLHQRVSVILGSKNEVERVTRYHQEAQAKA.

Glu-91, Asp-113, Leu-115, and Asp-116 together coordinate Mg(2+). Substrate is bound by residues 116–119 (DGSS), Asn-208, and Lys-274. Glu-280 contributes to the Mg(2+) binding site.

It belongs to the FBPase class 1 family. In terms of assembly, homotetramer. It depends on Mg(2+) as a cofactor.

It is found in the cytoplasm. The catalysed reaction is beta-D-fructose 1,6-bisphosphate + H2O = beta-D-fructose 6-phosphate + phosphate. The protein operates within carbohydrate biosynthesis; gluconeogenesis. This Cupriavidus taiwanensis (strain DSM 17343 / BCRC 17206 / CCUG 44338 / CIP 107171 / LMG 19424 / R1) (Ralstonia taiwanensis (strain LMG 19424)) protein is Fructose-1,6-bisphosphatase class 1 1.